We begin with the raw amino-acid sequence, 94 residues long: Adaptation to cold protein J (94 aa).

In terms of domain architecture, J spans 3–93 (NHFSVLGIKP…AMRELWDQFY (91 aa)). Positions 74 to 94 (NNVIVTDPNSAMRELWDQFYP) are essential for interaction with AtcC.

In terms of assembly, interacts via its C-terminal extension with AtcC. Does not interact with AtcA and AtcB.

Its function is as follows. Involved in cold adaptation. The J-domain is functional and can stimulate the ATPase activity of the DnaK chaperone. May work as a co-chaperone of the DnaK system to support cold resistance. This chain is Adaptation to cold protein J, found in Shewanella oneidensis (strain ATCC 700550 / JCM 31522 / CIP 106686 / LMG 19005 / NCIMB 14063 / MR-1).